The primary structure comprises 152 residues: uncharacterized protein (152 aa).

This sequence belongs to the antirestriction protein family.

This is an uncharacterized protein from Escherichia coli (strain K12).